A 902-amino-acid chain; its full sequence is Leucine-rich repeat-containing G-protein coupled receptor 5 (902 aa).

A signal peptide spans 1–22 (MDTSKTSFFLFSVLCSLQLVGA). The Extracellular portion of the chain corresponds to 23 to 558 (ARPGKQQRSC…HLFGSWLTRT (536 aa)). Intrachain disulfides connect cysteine 32-cysteine 38 and cysteine 36-cysteine 49. Positions 32-61 (CPTPCECEQEGMLVRVDCSDRALTSLPRNL) constitute an LRRNT domain. LRR repeat units lie at residues 41–61 (EGMLVRVDCSDRALTSLPRNL), 62–85 (SIFTSYLDLSMNNITNLPSNVMHN), 86–109 (LHFLEELRLAGNDLTYIPKGAFAG), 111–133 (GSLKVLMLQNNLLRQVPSEALHN), 134–157 (LRSLQSLRLDANHISYVPPSSFNG), 159–181 (FSLRHLWLDDNSLTEIPVRALES), 182–205 (LSALQAMTLALNKIHHIPDYAFRN), 207–229 (SSLVVLHLHNNRIYSLGKKCFDG), 230–253 (LHSLETLDLNYNNLDEFPAAIKTL), 254–276 (KNLKELGFHSNNIKSIPEQAFIG), 278–300 (PSLITIHFYDNPIQHVGRSAFQH), 302–324 (PELRTLILNGASQITEFPDLTGT), 325–347 (TSLESLTLTGAQLVYLPSAVCTQ), 348–372 (LPNLQVLDLSYNHIKDLPSFSGCQR), 374–393 (QKIDLRHNEVYEIRSTTFQQ), 394–417 (LVGLRSLDLAWNKIAVIHPNSFSS), and 418–441 (LPSLIKLDLSSNHLTSFPVTGLHG). N-linked (GlcNAc...) asparagine glycosylation is found at asparagine 60 and asparagine 74. Asparagine 205 carries N-linked (GlcNAc...) asparagine glycosylation. A disulfide bridge connects residues cysteine 345 and cysteine 370. Cysteines 476 and 537 form a disulfide. Asparagine 496 carries an N-linked (GlcNAc...) asparagine glycan. The helical transmembrane segment at 559–579 (GVWLIVLLSFVCNALVIATVF) threads the bilayer. At 580-589 (RPLSYVPSIK) the chain is on the cytoplasmic side. Residues 590-610 (LLIGLIAIMNTLMGLSSGVLA) form a helical membrane-spanning segment. One copy of the LRR 18 repeat lies at 598–619 (MNTLMGLSSGVLATVDALTFGN). Residues 611–634 (TVDALTFGNFAQYGAWWESGVGCQ) are Extracellular-facing. An intrachain disulfide couples cysteine 633 to cysteine 708. The helical transmembrane segment at 635-655 (ITGFLSVFAAETSIFLLTVAA) threads the bilayer. Residues 656 to 678 (LERGFSIKCTTKFETKSSFINVK) are Cytoplasmic-facing. A helical transmembrane segment spans residues 679 to 699 (LSIVFCFLLSIVIAVSPLLSG). Residues 700–718 (STYGTSPLCFPLLFGDPSS) lie on the Extracellular side of the membrane. A helical transmembrane segment spans residues 719–739 (MGFMVALVLLNSLCFLVMTIA). Over 740–763 (YTKLYCSLEKGELENIWDCSMVKH) the chain is Cytoplasmic. The helical transmembrane segment at 764–784 (IALLLFTNCILYCPVAFLSFS) threads the bilayer. Residues 785–798 (SLLNLTFISPEVNK) lie on the Extracellular side of the membrane. Residues asparagine 788 and asparagine 797 are each glycosylated (N-linked (GlcNAc...) asparagine). The helical transmembrane segment at 799-819 (SILLLIIPLPACLNPLLYILF) threads the bilayer. The Cytoplasmic segment spans residues 820–902 (NPHFKEDIGS…LSAVAFVPCH (83 aa)).

The protein belongs to the G-protein coupled receptor 1 family.

The protein resides in the cell membrane. The protein localises to the golgi apparatus. It is found in the trans-Golgi network membrane. In terms of biological role, receptor for R-spondins that potentiates the canonical Wnt signaling pathway and acts as a stem cell marker of the intestinal epithelium and the hair follicle. Upon binding to R-spondins (RSPO1, RSPO2, RSPO3 or RSPO4), associates with phosphorylated LRP6 and frizzled receptors that are activated by extracellular Wnt receptors, triggering the canonical Wnt signaling pathway to increase expression of target genes. In contrast to classical G-protein coupled receptors, does not activate heterotrimeric G-proteins to transduce the signal. Involved in the development and/or maintenance of the adult intestinal stem cells during postembryonic development. The sequence is that of Leucine-rich repeat-containing G-protein coupled receptor 5 (lgr5) from Xenopus tropicalis (Western clawed frog).